Consider the following 155-residue polypeptide: Transcriptional repressor NrdR (155 aa).

A zinc finger spans residues 3–34; the sequence is CPYCGHLEDRVVDSRETQDGQATRRRRACLSC. The 91-residue stretch at 49–139 folds into the ATP-cone domain; it reads PQVVKKDGRR…VYRAFRDVGE (91 aa).

The protein belongs to the NrdR family. Requires Zn(2+) as cofactor.

Its function is as follows. Negatively regulates transcription of bacterial ribonucleotide reductase nrd genes and operons by binding to NrdR-boxes. This Anaeromyxobacter sp. (strain K) protein is Transcriptional repressor NrdR.